The primary structure comprises 209 residues: Ribonuclease HII (209 aa).

Residues 18 to 209 (GLVAGVDEVG…FKPVKALLER (192 aa)) enclose the RNase H type-2 domain. The a divalent metal cation site is built by Asp24, Glu25, and Asp116.

This sequence belongs to the RNase HII family. It depends on Mn(2+) as a cofactor. The cofactor is Mg(2+).

It localises to the cytoplasm. The catalysed reaction is Endonucleolytic cleavage to 5'-phosphomonoester.. In terms of biological role, endonuclease that specifically degrades the RNA of RNA-DNA hybrids. The chain is Ribonuclease HII from Shewanella sp. (strain MR-7).